Reading from the N-terminus, the 208-residue chain is Large ribosomal subunit protein bL17 (208 aa).

The segment at 122–208 (TEKKKKKPAK…ASEEAPPKTE (87 aa)) is disordered. Positions 151 to 179 (ADTPAPAAEESAPAKAAEPEAEAAAPEAE) are enriched in low complexity.

This sequence belongs to the bacterial ribosomal protein bL17 family. In terms of assembly, part of the 50S ribosomal subunit. Contacts protein L32.

This Desulfosudis oleivorans (strain DSM 6200 / JCM 39069 / Hxd3) (Desulfococcus oleovorans) protein is Large ribosomal subunit protein bL17.